The primary structure comprises 207 residues: ATP-dependent Clp protease proteolytic subunit (207 aa).

Ser-111 functions as the Nucleophile in the catalytic mechanism. The active site involves His-136.

This sequence belongs to the peptidase S14 family. As to quaternary structure, fourteen ClpP subunits assemble into 2 heptameric rings which stack back to back to give a disk-like structure with a central cavity, resembling the structure of eukaryotic proteasomes.

It is found in the cytoplasm. It carries out the reaction Hydrolysis of proteins to small peptides in the presence of ATP and magnesium. alpha-casein is the usual test substrate. In the absence of ATP, only oligopeptides shorter than five residues are hydrolyzed (such as succinyl-Leu-Tyr-|-NHMec, and Leu-Tyr-Leu-|-Tyr-Trp, in which cleavage of the -Tyr-|-Leu- and -Tyr-|-Trp bonds also occurs).. Cleaves peptides in various proteins in a process that requires ATP hydrolysis. Has a chymotrypsin-like activity. Plays a major role in the degradation of misfolded proteins. The sequence is that of ATP-dependent Clp protease proteolytic subunit from Aeromonas salmonicida (strain A449).